Consider the following 254-residue polypeptide: 3-deoxy-manno-octulosonate cytidylyltransferase (254 aa).

It belongs to the KdsB family.

It localises to the cytoplasm. The enzyme catalyses 3-deoxy-alpha-D-manno-oct-2-ulosonate + CTP = CMP-3-deoxy-beta-D-manno-octulosonate + diphosphate. It functions in the pathway nucleotide-sugar biosynthesis; CMP-3-deoxy-D-manno-octulosonate biosynthesis; CMP-3-deoxy-D-manno-octulosonate from 3-deoxy-D-manno-octulosonate and CTP: step 1/1. The protein operates within bacterial outer membrane biogenesis; lipopolysaccharide biosynthesis. In terms of biological role, activates KDO (a required 8-carbon sugar) for incorporation into bacterial lipopolysaccharide in Gram-negative bacteria. This Pseudomonas syringae pv. tomato (strain ATCC BAA-871 / DC3000) protein is 3-deoxy-manno-octulosonate cytidylyltransferase.